The sequence spans 217 residues: Glycerol-3-phosphate acyltransferase (217 aa).

Transmembrane regions (helical) follow at residues 1–21 (MAWA…SIPT), 54–74 (TAAI…VGGV), 84–104 (AIVP…AAIL), 126–146 (VLLV…LFML), and 165–185 (LLML…LAGI).

It belongs to the PlsY family. Probably interacts with PlsX.

The protein localises to the cell inner membrane. The enzyme catalyses an acyl phosphate + sn-glycerol 3-phosphate = a 1-acyl-sn-glycero-3-phosphate + phosphate. The protein operates within lipid metabolism; phospholipid metabolism. Its function is as follows. Catalyzes the transfer of an acyl group from acyl-phosphate (acyl-PO(4)) to glycerol-3-phosphate (G3P) to form lysophosphatidic acid (LPA). This enzyme utilizes acyl-phosphate as fatty acyl donor, but not acyl-CoA or acyl-ACP. The chain is Glycerol-3-phosphate acyltransferase from Rippkaea orientalis (strain PCC 8801 / RF-1) (Cyanothece sp. (strain PCC 8801)).